We begin with the raw amino-acid sequence, 282 residues long: Putative 4-diphosphocytidyl-2-C-methyl-D-erythritol kinase (282 aa).

Lys9 is a catalytic residue. 93–103 is an ATP binding site; it reads PVSAGLAGGSA. The active site involves Asp135.

Belongs to the GHMP kinase family. IspE subfamily.

The enzyme catalyses 4-CDP-2-C-methyl-D-erythritol + ATP = 4-CDP-2-C-methyl-D-erythritol 2-phosphate + ADP + H(+). In terms of biological role, catalyzes the phosphorylation of the position 2 hydroxy group of 4-diphosphocytidyl-2C-methyl-D-erythritol. This Staphylococcus haemolyticus (strain JCSC1435) protein is Putative 4-diphosphocytidyl-2-C-methyl-D-erythritol kinase.